The sequence spans 873 residues: DNA mismatch repair protein MutS (873 aa).

The tract at residues 1-34 is disordered; it reads MAAIPTPRLHRGVTHLSRQTKSRARHPMSTPQHT. Residues 8–26 are compositionally biased toward basic residues; sequence RLHRGVTHLSRQTKSRARH. Residue 635–642 coordinates ATP; it reads GPNMGGKS.

It belongs to the DNA mismatch repair MutS family.

Functionally, this protein is involved in the repair of mismatches in DNA. It is possible that it carries out the mismatch recognition step. This protein has a weak ATPase activity. This is DNA mismatch repair protein MutS from Chromobacterium violaceum (strain ATCC 12472 / DSM 30191 / JCM 1249 / CCUG 213 / NBRC 12614 / NCIMB 9131 / NCTC 9757 / MK).